Consider the following 1230-residue polypeptide: Ubiquitin carboxyl-terminal hydrolase 15 (1230 aa).

The 141-residue stretch at 39–179 (EDSFTWNIPD…EGTLNITAYV (141 aa)) folds into the MATH domain. One can recognise a USP domain in the interval 205–536 (VGFRNQGATC…SAYMLVYIRQ (332 aa)). C214 acts as the Nucleophile in catalysis. H465 acts as the Proton acceptor in catalysis.

This sequence belongs to the peptidase C19 family. In terms of assembly, interacts with PEX6; promoting association with the PEX1-PEX6 ATPase complex.

It localises to the cytoplasm. It is found in the cytosol. The protein resides in the peroxisome. The enzyme catalyses Thiol-dependent hydrolysis of ester, thioester, amide, peptide and isopeptide bonds formed by the C-terminal Gly of ubiquitin (a 76-residue protein attached to proteins as an intracellular targeting signal).. Deubiquitinase involved in peroxisome import by mediating deubiquitination of the peroxisomal import receptor PEX5. Catalyzes deubiquitination of both monoubiquitiated and polyubiquitinated forms of PEX5 following its retrotranslocation into the cytosol, resetting PEX5 for a subsequent import cycle. The chain is Ubiquitin carboxyl-terminal hydrolase 15 from Saccharomyces cerevisiae (strain ATCC 204508 / S288c) (Baker's yeast).